Here is a 603-residue protein sequence, read N- to C-terminus: MSSEHIQNKLALLPDQPGCYLMKDRQGTIIYVGKAKILKNRVRSYFSGTHDSKTQRLVQEIVDFEYIVTSSNVEALLLEINLIKKHDPRFNIRLKDDKTYPFIKITNERHPRLIITRQVKKDKGKYFGPYPNVYAANEVKRILDRLYPLRKCSTLPNKVCLYYHLGQCLAPCVFDVEASKYKEMQDEIVAFLNGGYKTVKNDLMKKMQEAAENMEFEKAGEFRDQINAIETTMEKQKMTMNDFVDRDVFGYAIDKGWMCVQVFFIRQGKLIERDVSQFPFYNDADEDFLTFIGQFYQKANHIPPQEIYLPNDVDSEAVQAVVPDTKIIVPQRGNKKDLVKLAYKNAKIALNEKFMLLERNEERTVGAVERLGEAMGIPTPSRVEAFDNSNIHGTDPVSAMVTFLDGKPSKNDYRKYKIKTVEGPDDYATMREVIRRRYWRVLKEGLPMPDLILIDGGKGQIDSAKDVLTNELGLDIPVAGLAKDDKHRTSQLLFGDPLEIVPLERNSQEFYLLQRMQDEVHRFAITFHRQLRSKTGFQSILDGIPGVGPGRKKKLLKHFGSMKKLKEASIEEIKEAGVPLNVAEEVHKHITAFNEKAKNTEQK.

Positions 15-92 (DQPGCYLMKD…IKKHDPRFNI (78 aa)) constitute a GIY-YIG domain. Positions 197 to 232 (KTVKNDLMKKMQEAAENMEFEKAGEFRDQINAIETT) constitute a UVR domain.

The protein belongs to the UvrC family. In terms of assembly, interacts with UvrB in an incision complex.

Its subcellular location is the cytoplasm. Functionally, the UvrABC repair system catalyzes the recognition and processing of DNA lesions. UvrC both incises the 5' and 3' sides of the lesion. The N-terminal half is responsible for the 3' incision and the C-terminal half is responsible for the 5' incision. The protein is UvrABC system protein C of Listeria monocytogenes serovar 1/2a (strain ATCC BAA-679 / EGD-e).